We begin with the raw amino-acid sequence, 990 residues long: Pro-apoptotic serine protease NMA111 (990 aa).

A disordered region spans residues 1–32 (MSVTNSNRKRSLSEVSEGSDPEAPAKTRNSYT). Residues 73–263 (VVSIHFSQVA…LPLDRILRAL (191 aa)) form a serine protease region. Residues H111, D142, and S225 each act as charge relay system in the active site. 2 PDZ domains span residues 290–368 (RRLG…QRGG) and 758–843 (SILT…VREG).

Belongs to the peptidase S1C family.

It is found in the nucleus. Nuclear serine protease which mediates apoptosis. This Vanderwaltozyma polyspora (strain ATCC 22028 / DSM 70294 / BCRC 21397 / CBS 2163 / NBRC 10782 / NRRL Y-8283 / UCD 57-17) (Kluyveromyces polysporus) protein is Pro-apoptotic serine protease NMA111 (NMA111).